Consider the following 502-residue polypeptide: Phenylalanine--tRNA ligase alpha subunit (502 aa).

L-phenylalanine contacts are provided by residues Thr-339, 382–384 (QIE), and Tyr-422. Glu-424 lines the Mg(2+) pocket. Phe-448 is a binding site for L-phenylalanine.

Belongs to the class-II aminoacyl-tRNA synthetase family. Phe-tRNA synthetase alpha subunit type 2 subfamily. Tetramer of two alpha and two beta subunits. Mg(2+) is required as a cofactor.

It localises to the cytoplasm. It catalyses the reaction tRNA(Phe) + L-phenylalanine + ATP = L-phenylalanyl-tRNA(Phe) + AMP + diphosphate + H(+). The protein is Phenylalanine--tRNA ligase alpha subunit of Halobacterium salinarum (strain ATCC 29341 / DSM 671 / R1).